A 208-amino-acid chain; its full sequence is Small ribosomal subunit protein uS4 (208 aa).

In terms of domain architecture, S4 RNA-binding spans Thr-98 to Gln-161.

It belongs to the universal ribosomal protein uS4 family. Part of the 30S ribosomal subunit. Contacts protein S5. The interaction surface between S4 and S5 is involved in control of translational fidelity.

In terms of biological role, one of the primary rRNA binding proteins, it binds directly to 16S rRNA where it nucleates assembly of the body of the 30S subunit. Functionally, with S5 and S12 plays an important role in translational accuracy. In Maridesulfovibrio salexigens (strain ATCC 14822 / DSM 2638 / NCIMB 8403 / VKM B-1763) (Desulfovibrio salexigens), this protein is Small ribosomal subunit protein uS4.